Consider the following 424-residue polypeptide: CinA-like protein (424 aa).

This sequence belongs to the CinA family.

The chain is CinA-like protein from Prochlorococcus marinus (strain MIT 9312).